A 435-amino-acid polypeptide reads, in one-letter code: Serine protease snk (435 aa).

The N-terminal stretch at 1-27 is a signal peptide; the sequence is MIILWSLIVHLQLTCLHLILQTPNLEA. Residues 92–138 enclose the Clip domain; it reads FCRRSFDGRSGYCILAYQCLHVIREYRVHGTRIDICTHRNNVPVICC. 7 cysteine pairs are disulfide-bonded: C93/C137, C104/C127, C110/C138, C179/C303, C220/C236, C346/C366, and C377/C408. One can recognise a Peptidase S1 domain in the interval 186 to 432; that stretch reads IVGGTPTRHG…YLDWIEKIAF (247 aa). H235 acts as the Charge relay system in catalysis. An N-linked (GlcNAc...) asparagine glycan is attached at N255. D283 functions as the Charge relay system in the catalytic mechanism. S381 serves as the catalytic Charge relay system.

The protein belongs to the peptidase S1 family. CLIP subfamily. As to quaternary structure, interacts (via N-terminal prodomain) with ea/easter (via Peptidase domain); leads to proteolytic activation of ea by snk. This interaction does not require sulfation of a vitelline membrane component by pip but proteolytic cleavage of ea by snk does. In terms of processing, proteolytically activated by gd. May also be cleaved by another protease.

It is found in the secreted. Component of the extracellular signaling pathway that establishes the dorsal-ventral pathway of the embryo. A protease cascade involving ndl, gd, snk and ea results in activation of the spz Toll receptor ligand; acts downstream of ndl and gd. Activation of ea requires both activation of the ndl-gd-snk protease cascade and sulfation of a vitelline membrane component by pip. Localized activation of the Toll receptor in the ventral region of the embryo defines cell identities along the dorsal-ventral continuum. This chain is Serine protease snk, found in Drosophila melanogaster (Fruit fly).